A 367-amino-acid polypeptide reads, in one-letter code: mRNA-decapping enzyme-like protein (367 aa).

Disordered stretches follow at residues proline 144–proline 179, asparagine 196–proline 246, and proline 299–proline 333. Positions asparagine 196–isoleucine 211 are enriched in polar residues. A compositionally biased stretch (low complexity) spans proline 212–glutamine 234. Over residues proline 299–tyrosine 309 the composition is skewed to polar residues. The span at glutamine 315–threonine 331 shows a compositional bias: pro residues.

The protein belongs to the DCP1 family. Homodimer. Component of the decapping complex. Interacts with DCP2 and DCP5. Interacts with BCHA1. As to expression, expressed in seedlings, mostly in root tips, root hairs, and the vascular system. Also present in roots, leaves, stems, and flowers.

Its subcellular location is the cytoplasm. It localises to the P-body. Its function is as follows. As a component of the decapping complex, involved in the degradation of mRNAs. Essential for postembryonic development. This Arabidopsis thaliana (Mouse-ear cress) protein is mRNA-decapping enzyme-like protein.